The primary structure comprises 174 residues: Adenylate kinase (174 aa).

The segment at 12 to 41 (STGDMLRAAIKAGTPLGLEAKKIIDEGGLV) is NMP. AMP is bound by residues Thr-13, Arg-18, 39-41 (GLV), 67-70 (GFPR), and Gln-74. The tract at residues 104 to 141 (GRRVHLASGRTYHVTYNPPKVEGKDDVTGEDLIQRDDD) is LID. ATP contacts are provided by residues Arg-105 and 114 to 115 (TY). The AMP site is built by Arg-138 and Arg-149.

The protein belongs to the adenylate kinase family. Monomer.

It localises to the cytoplasm. It catalyses the reaction AMP + ATP = 2 ADP. It participates in purine metabolism; AMP biosynthesis via salvage pathway; AMP from ADP: step 1/1. Functionally, catalyzes the reversible transfer of the terminal phosphate group between ATP and AMP. Plays an important role in cellular energy homeostasis and in adenine nucleotide metabolism. This is Adenylate kinase from Neisseria flavescens.